A 587-amino-acid chain; its full sequence is 2-succinyl-5-enolpyruvyl-6-hydroxy-3-cyclohexene-1-carboxylate synthase (587 aa).

Belongs to the TPP enzyme family. MenD subfamily. In terms of assembly, homodimer. Mg(2+) serves as cofactor. The cofactor is Mn(2+). Thiamine diphosphate is required as a cofactor.

The catalysed reaction is isochorismate + 2-oxoglutarate + H(+) = 5-enolpyruvoyl-6-hydroxy-2-succinyl-cyclohex-3-ene-1-carboxylate + CO2. Its pathway is quinol/quinone metabolism; 1,4-dihydroxy-2-naphthoate biosynthesis; 1,4-dihydroxy-2-naphthoate from chorismate: step 2/7. It functions in the pathway cofactor biosynthesis; phylloquinone biosynthesis. Functionally, catalyzes the thiamine diphosphate-dependent decarboxylation of 2-oxoglutarate and the subsequent addition of the resulting succinic semialdehyde-thiamine pyrophosphate anion to isochorismate to yield 2-succinyl-5-enolpyruvyl-6-hydroxy-3-cyclohexene-1-carboxylate (SEPHCHC). The sequence is that of 2-succinyl-5-enolpyruvyl-6-hydroxy-3-cyclohexene-1-carboxylate synthase from Prochlorococcus marinus (strain MIT 9301).